We begin with the raw amino-acid sequence, 76 residues long: Alpha/kappa-conotoxin-like fe14.2 (76 aa).

Positions 1–24 (MPSVRSVTCCCLLWMMLSVQLVTP) are cleaved as a signal peptide. A propeptide spanning residues 25–39 (GSPGTAQLSGQRTAR) is cleaved from the precursor. 2 disulfide bridges follow: C46–C61 and C50–C63. R64 carries the post-translational modification Arginine amide. Residues 65–76 (GKRDVVSSSMAV) constitute a propeptide that is removed on maturation.

This sequence belongs to the conotoxin J superfamily. Expressed by the venom duct.

It is found in the secreted. Its function is as follows. Highly inhibits both nicotinic acetylcholine receptors (neuronal (alpha-3/beta-4) and muscular (alpha-1/beta-1/epsilon/delta) subtypes) and the voltage-gated potassium channel Kv1.6/KCNA6 subtype. In Conus ferrugineus (Cone snail), this protein is Alpha/kappa-conotoxin-like fe14.2.